A 445-amino-acid chain; its full sequence is NAD-specific glutamate dehydrogenase (445 aa).

K124 is a catalytic residue.

It belongs to the Glu/Leu/Phe/Val dehydrogenases family. Homohexamer.

The protein localises to the cell surface. The enzyme catalyses L-glutamate + NAD(+) + H2O = 2-oxoglutarate + NH4(+) + NADH + H(+). In terms of biological role, probably involved in degradation rather than biosynthesis of glutamate. In Porphyromonas gingivalis (strain ATCC 33277 / DSM 20709 / CIP 103683 / JCM 12257 / NCTC 11834 / 2561), this protein is NAD-specific glutamate dehydrogenase (gdh).